The sequence spans 491 residues: Equilibrative nucleobase transporter 1 (491 aa).

The chain crosses the membrane as a helical span at residues 17–37 (LLECLGFAGVLFGWPSLVFVF). Asn56 carries an N-linked (GlcNAc...) asparagine glycan. Transmembrane regions (helical) follow at residues 72–92 (LIFTLGSFMNNFMTFPTGYIF), 102–122 (LIAIFFYTTATLIIAFTSAGS), 123–143 (AVLLFLAMPMLTIGGILFLIT), 156–176 (STIITLYNGAFDSSSAVFLII), and 188–208 (ASFIFISVCSTWHVARTFLLM). N-linked (GlcNAc...) asparagine glycosylation is found at Asn220 and Asn229. Ser253 is modified (phosphoserine). Thr258 bears the Phosphothreonine mark. Helical transmembrane passes span 279-299 (FAWHLVWLSVIQLWHYLFIGT), 319-339 (TNAFAFTQFGVLCAPWNGLLM), 356-376 (STLAVALCSTVPSLALTSLLC), 396-418 (ILQVISRSFLYGSNAAFLTLAFP), 427-447 (GLVMALSAVVSLLQFPIFTLI), and 456-476 (FYVNVMFMLAILLTFFHPFLV).

It belongs to the SLC43A transporter (TC 2.A.1.44) family. Widely expressed with highest levels in the liver and lung, followed by the pancreas. Highly expressed in macrophages.

It localises to the basolateral cell membrane. The catalysed reaction is adenine(out) = adenine(in). It catalyses the reaction guanine(out) = guanine(in). It carries out the reaction hypoxanthine(out) = hypoxanthine(in). With respect to regulation, adenine transport is strongly inhibited by decynium-22. Its activity is regulated as follows. 6-mercaptopurine-transport is inhibited by 6-thioguanine, 6-methylmercaptopurine and decynium-22. Sodium-independent purine-selective nucleobase transporter which mediates the equilibrative transport of extracellular purine nucleobases such as adenine, guanine and hypoxanthine. May regulate fatty acid (FA) transport in adipocytes, acting as a positive regulator of FA efflux and as a negative regulator of FA uptake. Its function is as follows. Sodium-independent purine-selective nucleobase transporter which mediates the equilibrative transport of extracellular purine nucleobase adenine. Mediates the influx and efflux of the purine nucleobase analog drug 6-mercaptopurine across the membrane. The polypeptide is Equilibrative nucleobase transporter 1 (SLC43A3) (Homo sapiens (Human)).